Consider the following 354-residue polypeptide: 3-dehydroquinate synthase (354 aa).

Residues 69-74, 103-107, 127-128, lysine 140, and lysine 149 each bind NAD(+); these read DGEAEK, GVIGD, and TS. Positions 182, 245, and 262 each coordinate Zn(2+).

The protein belongs to the sugar phosphate cyclases superfamily. Dehydroquinate synthase family. Co(2+) serves as cofactor. Requires Zn(2+) as cofactor. The cofactor is NAD(+).

It is found in the cytoplasm. The catalysed reaction is 7-phospho-2-dehydro-3-deoxy-D-arabino-heptonate = 3-dehydroquinate + phosphate. The protein operates within metabolic intermediate biosynthesis; chorismate biosynthesis; chorismate from D-erythrose 4-phosphate and phosphoenolpyruvate: step 2/7. Functionally, catalyzes the conversion of 3-deoxy-D-arabino-heptulosonate 7-phosphate (DAHP) to dehydroquinate (DHQ). This Colwellia psychrerythraea (strain 34H / ATCC BAA-681) (Vibrio psychroerythus) protein is 3-dehydroquinate synthase.